A 455-amino-acid chain; its full sequence is Chromosomal replication initiator protein DnaA 2 (455 aa).

Positions 1–95 are domain I, interacts with DnaA modulators; the sequence is MLTCNDCSTW…KRSSPQIAAS (95 aa). The tract at residues 96-112 is domain II; the sequence is VTKPAVEVSEENKDFQL. The tract at residues 113 to 328 is domain III, AAA+ region; sequence KLNGAYRFDN…GAINKLTAYC (216 aa). The ATP site is built by glycine 157, glycine 159, lysine 160, and threonine 161. The interval 329–455 is domain IV, binds dsDNA; it reads LLFNKPLTET…IAIDSPQHFV (127 aa).

This sequence belongs to the DnaA family. As to quaternary structure, oligomerizes as a right-handed, spiral filament on DNA at oriC.

The protein resides in the cytoplasm. Plays an essential role in the initiation and regulation of chromosomal replication. ATP-DnaA binds to the origin of replication (oriC) to initiate formation of the DNA replication initiation complex once per cell cycle. Binds the DnaA box (a 9 base pair repeat at the origin) and separates the double-stranded (ds)DNA. Forms a right-handed helical filament on oriC DNA; dsDNA binds to the exterior of the filament while single-stranded (ss)DNA is stabiized in the filament's interior. The ATP-DnaA-oriC complex binds and stabilizes one strand of the AT-rich DNA unwinding element (DUE), permitting loading of DNA polymerase. After initiation quickly degrades to an ADP-DnaA complex that is not apt for DNA replication. Binds acidic phospholipids. The polypeptide is Chromosomal replication initiator protein DnaA 2 (Chlamydia muridarum (strain MoPn / Nigg)).